We begin with the raw amino-acid sequence, 399 residues long: Carbamoyl phosphate synthase small chain (399 aa).

The CPSase stretch occupies residues 1-204 (MTKTTLSSDP…WNKGYTINNE (204 aa)). L-glutamine-binding residues include Ser60, Gly256, and Gly258. A Glutamine amidotransferase type-1 domain is found at 208 to 396 (HIVAIDYGIK…HDLIVNYREQ (189 aa)). Cys285 (nucleophile) is an active-site residue. 5 residues coordinate L-glutamine: Leu286, Gln289, Asn327, Gly329, and Phe330. Catalysis depends on residues His369 and Glu371.

It belongs to the CarA family. Composed of two chains; the small (or glutamine) chain promotes the hydrolysis of glutamine to ammonia, which is used by the large (or ammonia) chain to synthesize carbamoyl phosphate. Tetramer of heterodimers (alpha,beta)4.

It catalyses the reaction hydrogencarbonate + L-glutamine + 2 ATP + H2O = carbamoyl phosphate + L-glutamate + 2 ADP + phosphate + 2 H(+). It carries out the reaction L-glutamine + H2O = L-glutamate + NH4(+). The protein operates within amino-acid biosynthesis; L-arginine biosynthesis; carbamoyl phosphate from bicarbonate: step 1/1. It functions in the pathway pyrimidine metabolism; UMP biosynthesis via de novo pathway; (S)-dihydroorotate from bicarbonate: step 1/3. Small subunit of the glutamine-dependent carbamoyl phosphate synthetase (CPSase). CPSase catalyzes the formation of carbamoyl phosphate from the ammonia moiety of glutamine, carbonate, and phosphate donated by ATP, constituting the first step of 2 biosynthetic pathways, one leading to arginine and/or urea and the other to pyrimidine nucleotides. The small subunit (glutamine amidotransferase) binds and cleaves glutamine to supply the large subunit with the substrate ammonia. In Bartonella bacilliformis (strain ATCC 35685 / KC583 / Herrer 020/F12,63), this protein is Carbamoyl phosphate synthase small chain.